The primary structure comprises 212 residues: Thiamine-phosphate synthase (212 aa).

4-amino-2-methyl-5-(diphosphooxymethyl)pyrimidine is bound by residues 40–44 (QFREK) and Asn75. 2 residues coordinate Mg(2+): Asp76 and Asp95. Ser113 lines the 4-amino-2-methyl-5-(diphosphooxymethyl)pyrimidine pocket. Position 139 to 141 (139 to 141 (TIS)) interacts with 2-[(2R,5Z)-2-carboxy-4-methylthiazol-5(2H)-ylidene]ethyl phosphate. Position 142 (Lys142) interacts with 4-amino-2-methyl-5-(diphosphooxymethyl)pyrimidine. 2-[(2R,5Z)-2-carboxy-4-methylthiazol-5(2H)-ylidene]ethyl phosphate is bound by residues Gly171 and 191 to 192 (IS).

It belongs to the thiamine-phosphate synthase family. It depends on Mg(2+) as a cofactor.

It catalyses the reaction 2-[(2R,5Z)-2-carboxy-4-methylthiazol-5(2H)-ylidene]ethyl phosphate + 4-amino-2-methyl-5-(diphosphooxymethyl)pyrimidine + 2 H(+) = thiamine phosphate + CO2 + diphosphate. It carries out the reaction 2-(2-carboxy-4-methylthiazol-5-yl)ethyl phosphate + 4-amino-2-methyl-5-(diphosphooxymethyl)pyrimidine + 2 H(+) = thiamine phosphate + CO2 + diphosphate. The enzyme catalyses 4-methyl-5-(2-phosphooxyethyl)-thiazole + 4-amino-2-methyl-5-(diphosphooxymethyl)pyrimidine + H(+) = thiamine phosphate + diphosphate. The protein operates within cofactor biosynthesis; thiamine diphosphate biosynthesis; thiamine phosphate from 4-amino-2-methyl-5-diphosphomethylpyrimidine and 4-methyl-5-(2-phosphoethyl)-thiazole: step 1/1. In terms of biological role, condenses 4-methyl-5-(beta-hydroxyethyl)thiazole monophosphate (THZ-P) and 2-methyl-4-amino-5-hydroxymethyl pyrimidine pyrophosphate (HMP-PP) to form thiamine monophosphate (TMP). The chain is Thiamine-phosphate synthase from Staphylococcus haemolyticus (strain JCSC1435).